A 279-amino-acid polypeptide reads, in one-letter code: Non-structural protein 2 (279 aa).

Residues 119 to 121 (DVL), Lys201, and 229 to 231 (HGH) contribute to the ATP site. The RNA-binding stretch occupies residues 214 to 249 (MLALKAVAGNQFFMYHGHGHIRTVPYHELLTLSNHS). The active-site For NTPase and RTPase activities is His233. Arg235 is a binding site for ATP.

Belongs to the rotavirus NSP2 family. As to quaternary structure, homooctamer. Interacts with VP1; this interaction is weak. Interacts with NSP5; this interaction leads to up-regulation of NSP5 phosphorylation and formation of viral factories. Mg(2+) serves as cofactor.

The protein resides in the host cytoplasm. Functionally, participates in replication and packaging of the viral genome. Plays a crucial role, together with NSP5, in the formation of virus factories (viroplasms) which are large inclusions in the host cytoplasm where replication intermediates are assembled and viral RNA replication takes place. Displays ssRNA binding, NTPase, RNA triphosphatase (RTPase) and ATP-independent helix-unwinding activities. The unwinding activity may prepare and organize plus-strand RNAs for packaging and replication by removing interfering secondary structures. The RTPase activity plays a role in the removal of the gamma-phosphate from the rotavirus RNA minus strands of dsRNA genome segments. This Homo sapiens (Human) protein is Non-structural protein 2.